A 197-amino-acid chain; its full sequence is Recombination protein RecR (197 aa).

A C4-type zinc finger spans residues 56–71 (CRLCNNFSEAEVCEVC). The 96-residue stretch at 79 to 174 (RQLAVVEMPA…KVSRLARGVP (96 aa)) folds into the Toprim domain.

Belongs to the RecR family.

Its function is as follows. May play a role in DNA repair. It seems to be involved in an RecBC-independent recombinational process of DNA repair. It may act with RecF and RecO. This Thiobacillus denitrificans (strain ATCC 25259 / T1) protein is Recombination protein RecR.